The sequence spans 378 residues: Phospho-N-acetylmuramoyl-pentapeptide-transferase (378 aa).

Helical transmembrane passes span 26 to 46 (LFRL…TGAN), 57 to 77 (LPWL…VPLL), 103 to 123 (MGGI…TGFA), 127 to 147 (LSPT…IGWW), 171 to 191 (GIGA…ATVV), 195 to 215 (WGWV…VPMA), 225 to 245 (GLDG…GIIL), 247 to 267 (PYPD…GFLW), 275 to 295 (VFMG…IGLA), 302 to 322 (LLIV…QVLY), and 356 to 376 (IVRT…LLQW).

The protein belongs to the glycosyltransferase 4 family. MraY subfamily. Mg(2+) serves as cofactor.

It is found in the cell inner membrane. It carries out the reaction UDP-N-acetyl-alpha-D-muramoyl-L-alanyl-gamma-D-glutamyl-meso-2,6-diaminopimeloyl-D-alanyl-D-alanine + di-trans,octa-cis-undecaprenyl phosphate = di-trans,octa-cis-undecaprenyl diphospho-N-acetyl-alpha-D-muramoyl-L-alanyl-D-glutamyl-meso-2,6-diaminopimeloyl-D-alanyl-D-alanine + UMP. It participates in cell wall biogenesis; peptidoglycan biosynthesis. Its function is as follows. Catalyzes the initial step of the lipid cycle reactions in the biosynthesis of the cell wall peptidoglycan: transfers peptidoglycan precursor phospho-MurNAc-pentapeptide from UDP-MurNAc-pentapeptide onto the lipid carrier undecaprenyl phosphate, yielding undecaprenyl-pyrophosphoryl-MurNAc-pentapeptide, known as lipid I. The chain is Phospho-N-acetylmuramoyl-pentapeptide-transferase from Thermosynechococcus vestitus (strain NIES-2133 / IAM M-273 / BP-1).